Reading from the N-terminus, the 412-residue chain is CinA-like protein (412 aa).

It belongs to the CinA family.

This chain is CinA-like protein, found in Syntrophotalea carbinolica (strain DSM 2380 / NBRC 103641 / GraBd1) (Pelobacter carbinolicus).